Consider the following 160-residue polypeptide: uncharacterized protein (160 aa).

It belongs to the Dps family.

This is an uncharacterized protein from Haemophilus influenzae (strain ATCC 51907 / DSM 11121 / KW20 / Rd).